The chain runs to 349 residues: Achromobactin transport system permease protein CbrC (349 aa).

Transmembrane regions (helical) follow at residues 32–52 (LALL…KLML), 82–102 (VLAA…QAMI), 111–131 (ILGI…FLAA), 138–158 (LPLA…WLAW), 168–188 (VLTG…MLVF), 190–210 (PLTT…GASW), 216–236 (LGGW…QVRV), 263–283 (VALA…GLIA), 290–310 (LVAP…AGLV), and 325–345 (DLPA…YLLI).

This sequence belongs to the binding-protein-dependent transport system permease family. FecCD subfamily.

It localises to the cell inner membrane. Its function is as follows. Part of the binding-protein-dependent transport system CbrABCD for uptake of the siderophore achromobactin. Probably responsible for the translocation of the substrate across the membrane. This is Achromobactin transport system permease protein CbrC (cbrC) from Dickeya dadantii (strain 3937) (Erwinia chrysanthemi (strain 3937)).